The primary structure comprises 250 residues: Phosphoribosylaminoimidazole-succinocarboxamide synthase (250 aa).

Belongs to the SAICAR synthetase family.

It catalyses the reaction 5-amino-1-(5-phospho-D-ribosyl)imidazole-4-carboxylate + L-aspartate + ATP = (2S)-2-[5-amino-1-(5-phospho-beta-D-ribosyl)imidazole-4-carboxamido]succinate + ADP + phosphate + 2 H(+). It participates in purine metabolism; IMP biosynthesis via de novo pathway; 5-amino-1-(5-phospho-D-ribosyl)imidazole-4-carboxamide from 5-amino-1-(5-phospho-D-ribosyl)imidazole-4-carboxylate: step 1/2. In Chloroflexus aggregans (strain MD-66 / DSM 9485), this protein is Phosphoribosylaminoimidazole-succinocarboxamide synthase.